We begin with the raw amino-acid sequence, 221 residues long: Serine/arginine-rich splicing factor 2 (221 aa).

Ser2 carries the N-acetylserine modification. Residue Ser2 is modified to Phosphoserine. Positions 14–92 (TSLKVDNLTY…RELRVQMARY (79 aa)) constitute an RRM domain. Phosphothreonine is present on residues Thr22 and Thr25. Ser26 bears the Phosphoserine mark. Lys52 bears the N6-acetyllysine mark. Residues 92–221 (YGRPPDSHHS…SPEEEGAVSS (130 aa)) are disordered. 2 stretches are compositionally biased toward basic residues: residues 117 to 171 (RRSR…RSKS) and 179 to 189 (SRSRSRSRSRS). Ser189, Ser191, Ser204, Ser206, Ser208, Ser212, and Ser220 each carry phosphoserine.

It belongs to the splicing factor SR family. Interacts with CCNL1 and CCNL2. Interacts with SCAF11. Interacts with ZRSR2/U2AF1-RS2. Interacts with CCDC55 (via C-terminus). In vitro, self-associates and binds SRSF1/SFRS1 (ASF/SF2), SNRNP70 and U2AF1 but not U2AF2. Binds SREK1/SFRS12. Interacts with BRDT. In terms of processing, extensively phosphorylated on serine residues in the RS domain. Phosphorylated by SRPK2 and this causes its redistribution from the nuclear speckle to nucleoplasm and controls cell fate decision in response to cisplatin treatment. KAT5/TIP60 inhibits its phosphorylation by preventing SRPK2 nuclear translocation. Post-translationally, acetylation on Lys-52 by KAT5/TIP60 promotes its proteasomal degradation. This effect is counterbalanced by HDAC6, which positively controls SRSF2 protein level by deacetylating it and preventing its proteasomal degradation. Expressed in all the tissues examined; liver, kidney, spleen, heart, lung and brain.

It localises to the nucleus. The protein localises to the nucleoplasm. Its subcellular location is the nucleus speckle. In terms of biological role, necessary for the splicing of pre-mRNA. It is required for formation of the earliest ATP-dependent splicing complex and interacts with spliceosomal components bound to both the 5'- and 3'-splice sites during spliceosome assembly. It also is required for ATP-dependent interactions of both U1 and U2 snRNPs with pre-mRNA. Can bind to the myelin basic protein (MBP) gene MB3 regulatory region and increase transcription of the mbp promoter in cells derived from the CNS. The phosphorylated form (by SRPK2) is required for cellular apoptosis in response to cisplatin treatment. The chain is Serine/arginine-rich splicing factor 2 (Srsf2) from Mus musculus (Mouse).